A 124-amino-acid polypeptide reads, in one-letter code: Small ribosomal subunit protein uS12 (124 aa).

The residue at position 90 (Asp-90) is a 3-methylthioaspartic acid.

This sequence belongs to the universal ribosomal protein uS12 family. As to quaternary structure, part of the 30S ribosomal subunit. Contacts proteins S8 and S17. May interact with IF1 in the 30S initiation complex.

Its function is as follows. With S4 and S5 plays an important role in translational accuracy. In terms of biological role, interacts with and stabilizes bases of the 16S rRNA that are involved in tRNA selection in the A site and with the mRNA backbone. Located at the interface of the 30S and 50S subunits, it traverses the body of the 30S subunit contacting proteins on the other side and probably holding the rRNA structure together. The combined cluster of proteins S8, S12 and S17 appears to hold together the shoulder and platform of the 30S subunit. This chain is Small ribosomal subunit protein uS12, found in Wolbachia sp. subsp. Brugia malayi (strain TRS).